Here is a 71-residue protein sequence, read N- to C-terminus: Beta-defensin 124 (71 aa).

The first 22 residues, 1–22 (MTQLLLFLVALLVLGHVPSGRS), serve as a signal peptide directing secretion. 3 disulfide bridges follow: Cys-27/Cys-54, Cys-34/Cys-48, and Cys-38/Cys-55.

Belongs to the beta-defensin family.

The protein localises to the secreted. Its function is as follows. Has antibacterial activity. The chain is Beta-defensin 124 (DEFB124) from Pan troglodytes (Chimpanzee).